A 295-amino-acid chain; its full sequence is Protease HtpX (295 aa).

2 helical membrane-spanning segments follow: residues 4–24 (ILLFVATNLAVVLVASITLSL) and 41–61 (SSLLVFCAVFGFAGSLVSLFI). A Zn(2+)-binding site is contributed by histidine 147. Residue glutamate 148 is part of the active site. Histidine 151 provides a ligand contact to Zn(2+). Helical transmembrane passes span 158–178 (VTLALVQGVVNTFVMFFARII) and 199–219 (VATIVAELILGILASMIVMWF). Position 224 (glutamate 224) interacts with Zn(2+).

The protein belongs to the peptidase M48B family. It depends on Zn(2+) as a cofactor.

It localises to the cell inner membrane. This chain is Protease HtpX, found in Pseudomonas putida (strain ATCC 47054 / DSM 6125 / CFBP 8728 / NCIMB 11950 / KT2440).